Reading from the N-terminus, the 231-residue chain is Uracil phosphoribosyltransferase (231 aa).

38–42 (KGLVR) is a binding site for GTP. 5-phospho-alpha-D-ribose 1-diphosphate contacts are provided by residues Arg-87, Arg-112, and 140 to 148 (DPMIATGST). Uracil-binding positions include Ile-203 and 208–210 (GDA). Residue Asp-209 coordinates 5-phospho-alpha-D-ribose 1-diphosphate.

Belongs to the UPRTase family. The cofactor is Mg(2+).

It catalyses the reaction UMP + diphosphate = 5-phospho-alpha-D-ribose 1-diphosphate + uracil. The protein operates within pyrimidine metabolism; UMP biosynthesis via salvage pathway; UMP from uracil: step 1/1. With respect to regulation, allosterically activated by GTP. Catalyzes the conversion of uracil and 5-phospho-alpha-D-ribose 1-diphosphate (PRPP) to UMP and diphosphate. The polypeptide is Uracil phosphoribosyltransferase (Methanococcus maripaludis (strain DSM 14266 / JCM 13030 / NBRC 101832 / S2 / LL)).